The chain runs to 200 residues: Molybdenum cofactor guanylyltransferase (200 aa).

GTP contacts are provided by residues 10 to 12 (LAG), lysine 23, asparagine 51, aspartate 69, and aspartate 99. Aspartate 99 is a Mg(2+) binding site.

Belongs to the MobA family. In terms of assembly, monomer. It depends on Mg(2+) as a cofactor.

It is found in the cytoplasm. The enzyme catalyses Mo-molybdopterin + GTP + H(+) = Mo-molybdopterin guanine dinucleotide + diphosphate. Functionally, transfers a GMP moiety from GTP to Mo-molybdopterin (Mo-MPT) cofactor (Moco or molybdenum cofactor) to form Mo-molybdopterin guanine dinucleotide (Mo-MGD) cofactor. In Shewanella pealeana (strain ATCC 700345 / ANG-SQ1), this protein is Molybdenum cofactor guanylyltransferase.